A 1036-amino-acid chain; its full sequence is Isoleucine--tRNA ligase (1036 aa).

A 'HIGH' region motif is present at residues P46–H56. Residues K589–R593 carry the 'KMSKS' region motif. ATP is bound at residue K592.

It belongs to the class-I aminoacyl-tRNA synthetase family. IleS type 2 subfamily. As to quaternary structure, monomer. Zn(2+) is required as a cofactor.

It localises to the cytoplasm. The enzyme catalyses tRNA(Ile) + L-isoleucine + ATP = L-isoleucyl-tRNA(Ile) + AMP + diphosphate. Catalyzes the attachment of isoleucine to tRNA(Ile). As IleRS can inadvertently accommodate and process structurally similar amino acids such as valine, to avoid such errors it has two additional distinct tRNA(Ile)-dependent editing activities. One activity is designated as 'pretransfer' editing and involves the hydrolysis of activated Val-AMP. The other activity is designated 'posttransfer' editing and involves deacylation of mischarged Val-tRNA(Ile). The polypeptide is Isoleucine--tRNA ligase (Chlamydia trachomatis serovar L2b (strain UCH-1/proctitis)).